The primary structure comprises 75 residues: Sec-independent protein translocase protein TatA (75 aa).

The chain crosses the membrane as a helical span at residues 1 to 21; sequence MGSFSIWHWLVVLAIVLLVFG. The disordered stretch occupies residues 40-75; that stretch reads KKGMRDEDKPNAQLGDESRSQDASRTAQDEHDRTPR.

The protein belongs to the TatA/E family. As to quaternary structure, the Tat system comprises two distinct complexes: a TatABC complex, containing multiple copies of TatA, TatB and TatC subunits, and a separate TatA complex, containing only TatA subunits. Substrates initially bind to the TatABC complex, which probably triggers association of the separate TatA complex to form the active translocon.

It is found in the cell inner membrane. Part of the twin-arginine translocation (Tat) system that transports large folded proteins containing a characteristic twin-arginine motif in their signal peptide across membranes. TatA could form the protein-conducting channel of the Tat system. The sequence is that of Sec-independent protein translocase protein TatA from Stenotrophomonas maltophilia (strain R551-3).